The sequence spans 189 residues: FUN14 domain-containing protein 2 (189 aa).

Residues 1–80 (METSAPRAGS…GQESGPSAEK (80 aa)) lie on the Cytoplasmic side of the membrane. A phosphoserine mark is found at Ser10 and Ser53. Residues 81–101 (YSVATQLFIGGVTGWCTGFIF) form a helical membrane-spanning segment. The Mitochondrial intermembrane portion of the chain corresponds to 102–107 (QNVGKL). The helical transmembrane segment at 108–128 (AATAVGGGFFLLQLANHTGYI) threads the bilayer. Over 129 to 164 (KVDWQRVEKDMKKAKEQLKIRKSNQMPTEVRSKAEE) the chain is Cytoplasmic. Residue Ser151 is modified to Phosphoserine. A helical membrane pass occupies residues 165–185 (VVSFVKKNVLVTGGFFGGFLL). Over 186–189 (GMAS) the chain is Mitochondrial intermembrane.

Belongs to the FUN14 family.

Its subcellular location is the mitochondrion outer membrane. It is found in the nucleus. In terms of biological role, binds directly and specifically 1,2-Diacyl-sn-glycero-3-phospho-(1'-myo-inositol-3',4',5'-bisphosphate) (PIP3) leading to the recruitment of PIP3 to mitochondria and may play a role in the regulation of the platelet activation via AKT/GSK3B/cGMP signaling pathways. May act as transcription factor that regulates SREBP1 (isoform SREBP-1C) expression in order to modulate triglyceride (TG) homeostasis in hepatocytes. This is FUN14 domain-containing protein 2 from Macaca mulatta (Rhesus macaque).